Here is a 292-residue protein sequence, read N- to C-terminus: Protease HtpX (292 aa).

2 helical membrane passes run 4–24 (IVLF…ILFL) and 32–52 (IYGL…LSLI). Position 139 (His-139) interacts with Zn(2+). Glu-140 is a catalytic residue. His-143 is a binding site for Zn(2+). The next 2 helical transmembrane spans lie at 147-167 (GDMI…IFIS) and 193-213 (FVYF…ASII). A Zn(2+)-binding site is contributed by Glu-222.

This sequence belongs to the peptidase M48B family. The cofactor is Zn(2+).

Its subcellular location is the cell membrane. This Buchnera aphidicola subsp. Acyrthosiphon pisum (strain 5A) protein is Protease HtpX.